The primary structure comprises 440 residues: Amino acid transporter AVT6D (440 aa).

11 consecutive transmembrane segments (helical) span residues 26–46 (FAGAVFNISTSIVGAGIMAIP), 47–67 (AAFKVLGVIPSLSIIVIIAWL), 102–122 (AVTVVTMVVTFGSMIIFSIII), 149–169 (WNTRFFGLLFIFVFLFLPLVL), 182–202 (ISFLLALLFVVISSVLAIIAL), 219–239 (GGLSFFSLFTASPVIVTAFTF), 262–282 (ISVILCATIYSATGLFCYLLF), 309–329 (IVRLSYAIHLMLVFPLLNFSL), 356–376 (FPLLISCFLGAIAIPDIWYFF), 377–397 (QFLGSTSTVSIAFIFPAAIVL), and 410–430 (IVASVMLVLAVATSIIAISTN).

This sequence belongs to the amino acid/polyamine transporter 2 family. Amino acid/auxin permease (AAAP) (TC 2.A.18.6) subfamily.

It is found in the membrane. This Arabidopsis thaliana (Mouse-ear cress) protein is Amino acid transporter AVT6D.